Here is a 311-residue protein sequence, read N- to C-terminus: Methionyl-tRNA formyltransferase (311 aa).

110-113 lines the (6S)-5,6,7,8-tetrahydrofolate pocket; that stretch reads SLLP.

The protein belongs to the Fmt family.

It catalyses the reaction L-methionyl-tRNA(fMet) + (6R)-10-formyltetrahydrofolate = N-formyl-L-methionyl-tRNA(fMet) + (6S)-5,6,7,8-tetrahydrofolate + H(+). In terms of biological role, attaches a formyl group to the free amino group of methionyl-tRNA(fMet). The formyl group appears to play a dual role in the initiator identity of N-formylmethionyl-tRNA by promoting its recognition by IF2 and preventing the misappropriation of this tRNA by the elongation apparatus. The chain is Methionyl-tRNA formyltransferase from Streptococcus pneumoniae serotype 2 (strain D39 / NCTC 7466).